The following is a 351-amino-acid chain: Polycomb group RING finger protein 6 (351 aa).

The interval 1 to 114 (MEEAETDATE…FSLRLESGRA (114 aa)) is disordered. Basic and acidic residues predominate over residues 9-19 (TENKRASEAKR). A compositionally biased stretch (pro residues) spans 24–37 (LPPPPPPISPPALI). Serine 32 carries the post-translational modification Phosphoserine. A compositionally biased stretch (low complexity) spans 38–51 (PAPAAGEEGPASLA). Residues 62-80 (RPPELEPERSLGRLRGRFE) are compositionally biased toward basic and acidic residues. A coiled-coil region spans residues 69-110 (ERSLGRLRGRFEDYDEELEEDEEMEEEEEEEEEMSHFSLRLE). The span at 81-101 (DYDEELEEDEEMEEEEEEEEE) shows a compositional bias: acidic residues. The residue at position 116 (serine 116) is a Phosphoserine. The segment at 135-174 (CSICKGYLIDATTITECLHTFCKSCIVRHFYYSNRCPKCN) adopts an RING-type zinc-finger fold. Residues lysine 224 and lysine 235 each participate in a glycyl lysine isopeptide (Lys-Gly) (interchain with G-Cter in SUMO2) cross-link.

Component of a PRC1-like complex. Interacts with BMI1/PCGF4, RING1 and RNF2. Interacts with KDM5D. Interacts with CBX4, CBX6, CBX7 and CBX8. Post-translationally, phosphorylated during mitosis.

It localises to the nucleus. In terms of biological role, transcriptional repressor. May modulate the levels of histone H3K4Me3 by activating KDM5D histone demethylase. Component of a Polycomb group (PcG) multiprotein PRC1-like complex, a complex class required to maintain the transcriptionally repressive state of many genes, including Hox genes, throughout development. PcG PRC1 complex acts via chromatin remodeling and modification of histones; it mediates monoubiquitination of histone H2A 'Lys-119', rendering chromatin heritably changed in its expressibility. Within the PRC1-like complex, regulates RNF2 ubiquitin ligase activity. The protein is Polycomb group RING finger protein 6 (Pcgf6) of Rattus norvegicus (Rat).